The sequence spans 87 residues: uncharacterized protein (87 aa).

An N-terminal signal peptide occupies residues 1-25; sequence MKIRKILLSSALSFGMLISAVPALA.

This is an uncharacterized protein from Bacillus subtilis (strain 168).